The following is a 460-amino-acid chain: MTTKNHKLWGGRFEAGLAQWVEEFGASISFDQKLAEFDLKGSIAHVTMLGEKGIISQEDAATIKAGLEDLLEEYKAGQLKFDVSNEDIHMNMESLLTAKIGPVAGKLHTARSRNDQVATDMHLYLKAKLDEVIEKLANLRTVLVDLADKHVHTIMPGYTHLQHAQPISFGHHLMAYYNMFTRDSERFIFNVKHTDLSPLGAAALAGTTFPIDREMTAQLMGFAEPYSNSLDAVSDRDFILEFLSNASILMMHMSRMCEEVISWCSHEYQFVTLSDTFSTGSSIMPQKKNPDMAELIRGKSGRVYANLFGLLTVMKALPLAYNKDLQEDKEGMFDTAETITVALDILAGMLSSMIVNDKHMAESTQKDFSNATELADYLASKGMPFRQAHEIVGKLILECSKNGHYLQDVPLERYQTISDLIEEDVYETLKSHTAVERRHSLGGTGFEQVKWQIAEAKKAL.

This sequence belongs to the lyase 1 family. Argininosuccinate lyase subfamily.

The protein localises to the cytoplasm. It catalyses the reaction 2-(N(omega)-L-arginino)succinate = fumarate + L-arginine. The protein operates within amino-acid biosynthesis; L-arginine biosynthesis; L-arginine from L-ornithine and carbamoyl phosphate: step 3/3. The sequence is that of Argininosuccinate lyase from Streptococcus mutans serotype c (strain ATCC 700610 / UA159).